Here is a 1040-residue protein sequence, read N- to C-terminus: DNA cross-link repair 1A protein (1040 aa).

Residues 1–190 (MLEDISEEDI…RAGDHPFSSP (190 aa)) form a nuclear localization region region. The disordered stretch occupies residues 15-76 (SKRKPKRVDP…LGNAGCQTSV (62 aa)). Over residues 53–65 (RAAEAKEVKDHEV) the composition is skewed to basic and acidic residues. The UBZ4-type zinc finger occupies 119 to 149 (DGYCPNCQMPFSSLIGQTPRWHVFECLDSPP). Zn(2+) contacts are provided by cysteine 122, cysteine 125, histidine 140, and cysteine 144. Residues lysine 202, lysine 236, lysine 269, lysine 353, lysine 361, lysine 429, lysine 488, lysine 508, lysine 517, lysine 533, and lysine 536 each participate in a glycyl lysine isopeptide (Lys-Gly) (interchain with G-Cter in SUMO2) cross-link. The interval 396–614 (LPYDLACTGG…KSLSDLEFDA (219 aa)) is nuclear focus formation. 2 disordered regions span residues 582 to 602 (GINL…CKRK) and 623 to 651 (SVEL…ACQK). At serine 590 the chain carries Phosphoserine. Residues lysine 668, lysine 670, and lysine 674 each participate in a glycyl lysine isopeptide (Lys-Gly) (interchain with G-Cter in SUMO2) cross-link.

The protein belongs to the DNA repair metallo-beta-lactamase (DRMBL) family. In terms of assembly, binds constitutively to TP53BP1. Binds CDC27, which is itself a component of the anaphase promoting complex (APC). Binds PIAS1. In terms of tissue distribution, expressed in brain, heart, kidney, liver, pancreas, placenta and skeletal muscle.

It localises to the nucleus. The enzyme catalyses a beta-lactam + H2O = a substituted beta-amino acid. Beta-lactamase activity is inhibited by sulbactam. Functionally, may be required for DNA interstrand cross-link repair. Also required for checkpoint mediated cell cycle arrest in early prophase in response to mitotic spindle poisons. Possesses beta-lactamase activity, catalyzing the hydrolysis of penicillin G and nitrocefin. Exhibits no activity towards other beta-lactam antibiotic classes including cephalosporins (cefotaxime) and carbapenems (imipenem). The chain is DNA cross-link repair 1A protein (DCLRE1A) from Homo sapiens (Human).